The sequence spans 317 residues: Adenine deaminase (317 aa).

Zn(2+) is bound by residues His-14, His-16, and His-194. Residue Glu-197 is the Proton donor of the active site. A Zn(2+)-binding site is contributed by Asp-275. Residue Asp-276 participates in substrate binding.

It belongs to the metallo-dependent hydrolases superfamily. Adenosine and AMP deaminases family. Adenine deaminase type 2 subfamily. Zn(2+) serves as cofactor.

It catalyses the reaction adenine + H2O + H(+) = hypoxanthine + NH4(+). Functionally, catalyzes the hydrolytic deamination of adenine to hypoxanthine. Plays an important role in the purine salvage pathway and in nitrogen catabolism. The protein is Adenine deaminase of Pseudomonas fluorescens (strain Pf0-1).